We begin with the raw amino-acid sequence, 425 residues long: Glucan 1,3-beta-glucosidase (425 aa).

The N-terminal stretch at 1–17 (MLLTFAPIFLLISSIVA) is a signal peptide. E214 acts as the Proton donor in catalysis. 2 cysteine pairs are disulfide-bonded: C301–C423 and C326–C352. K328 functions as the Nucleophile in the catalytic mechanism.

The protein belongs to the glycosyl hydrolase 5 (cellulase A) family.

It is found in the secreted. It catalyses the reaction Successive hydrolysis of beta-D-glucose units from the non-reducing ends of (1-&gt;3)-beta-D-glucans, releasing alpha-glucose.. Beta-glucanases participate in the metabolism of beta-glucan, the main structural component of the cell wall. It could also function biosynthetically as a transglycosylase. This Candida oleophila (Yeast) protein is Glucan 1,3-beta-glucosidase (EXG1).